The chain runs to 229 residues: MANELTWHDVLAEEKQQPYFLNTLQTVASERQSGVTIYPPQKDVFNAFRFTELGDVKVVILGQDPYHGPGQAHGLAFSVRPGIAIPPSLLNMYKELENTIPGFTRPNHGYLESWARQGVLLLNTVLTVRAGQAHSHASLGWETFTDKVISLINQHREGVVFLLWGSHAQKKGAIIDKQRHHVLKAPHPSPLSAHRGFFGCNHFVLANQWLEQRGETPIDWMPVLPAESE.

Catalysis depends on D64, which acts as the Proton acceptor.

The protein belongs to the uracil-DNA glycosylase (UDG) superfamily. UNG family.

The protein localises to the cytoplasm. It carries out the reaction Hydrolyzes single-stranded DNA or mismatched double-stranded DNA and polynucleotides, releasing free uracil.. Excises uracil residues from the DNA which can arise as a result of misincorporation of dUMP residues by DNA polymerase or due to deamination of cytosine. This Escherichia coli (strain 55989 / EAEC) protein is Uracil-DNA glycosylase.